A 430-amino-acid polypeptide reads, in one-letter code: Lipoyl synthase, mitochondrial (430 aa).

The transit peptide at 1–37 (MAASTGKLRTLFSAHSSLSARPSSALPALRLTILRSY) directs the protein to the mitochondrion. Positions 40 to 56 (TTPPDSSISDPSNSSTT) are enriched in low complexity. Residues 40–63 (TTPPDSSISDPSNSSTTVKRPPTA) are disordered. The [4Fe-4S] cluster site is built by Cys-141, Cys-146, Cys-152, Cys-172, Cys-176, Cys-179, and Ser-387. The Radical SAM core domain occupies 155 to 376 (GSSKSAATAT…KERALEMGFL (222 aa)).

This sequence belongs to the radical SAM superfamily. Lipoyl synthase family. [4Fe-4S] cluster is required as a cofactor.

It is found in the mitochondrion. It carries out the reaction [[Fe-S] cluster scaffold protein carrying a second [4Fe-4S](2+) cluster] + N(6)-octanoyl-L-lysyl-[protein] + 2 oxidized [2Fe-2S]-[ferredoxin] + 2 S-adenosyl-L-methionine + 4 H(+) = [[Fe-S] cluster scaffold protein] + N(6)-[(R)-dihydrolipoyl]-L-lysyl-[protein] + 4 Fe(3+) + 2 hydrogen sulfide + 2 5'-deoxyadenosine + 2 L-methionine + 2 reduced [2Fe-2S]-[ferredoxin]. It functions in the pathway protein modification; protein lipoylation via endogenous pathway; protein N(6)-(lipoyl)lysine from octanoyl-[acyl-carrier-protein]: step 2/2. Functionally, catalyzes the radical-mediated insertion of two sulfur atoms into the C-6 and C-8 positions of the octanoyl moiety bound to the lipoyl domains of lipoate-dependent enzymes, thereby converting the octanoylated domains into lipoylated derivatives. In Ajellomyces dermatitidis (strain ER-3 / ATCC MYA-2586) (Blastomyces dermatitidis), this protein is Lipoyl synthase, mitochondrial.